The sequence spans 387 residues: MGRVGVLLLNLGGPDRLEDVRPFLFNLFSDPEIIRLPVPWLQKPLAWLISTLRSRKSQENYLQIGGGSPLRKITEAQAEALEKRLEEIGHSVQVYIGMRYWHPFTEEAIARIKRDRIQKLVILPLYPQFSISTSGSSFRVLEEIWKQDPSLKQIEYSLIPSWYDNPGYLEAMADLISQELGQYSNPDTVHIFFSAHGVPQSYVDEAGDPYQKEIEECTRLIMKTLNRPNDYTLAYQSRVGPVEWLKPYTEDALKELGEQGIKEILVIPISFVSEHIETLQEIDIEYREVAEEAGIDHFQRVPALNTHPIFIDSLAQLVINSLTENSYTFEEITRPKKNMKMYPQERWEWGMTTAAEVWNGRLAMIGFIALLIELISGHGPLHFVGLL.

Fe cation is bound by residues His-196 and Glu-277.

Belongs to the ferrochelatase family.

It is found in the cytoplasm. It carries out the reaction heme b + 2 H(+) = protoporphyrin IX + Fe(2+). Its pathway is porphyrin-containing compound metabolism; protoheme biosynthesis; protoheme from protoporphyrin-IX: step 1/1. Functionally, catalyzes the ferrous insertion into protoporphyrin IX. The polypeptide is Ferrochelatase (Gloeothece citriformis (strain PCC 7424) (Cyanothece sp. (strain PCC 7424))).